The primary structure comprises 603 residues: DNA mismatch repair protein MutL (603 aa).

The span at 336–346 (EVSKKQKEQQK) shows a compositional bias: basic and acidic residues. The interval 336-372 (EVSKKQKEQQKSEQIQMSFEENRQPKEPPTLFSKPNI) is disordered.

It belongs to the DNA mismatch repair MutL/HexB family.

This protein is involved in the repair of mismatches in DNA. It is required for dam-dependent methyl-directed DNA mismatch repair. May act as a 'molecular matchmaker', a protein that promotes the formation of a stable complex between two or more DNA-binding proteins in an ATP-dependent manner without itself being part of a final effector complex. This is DNA mismatch repair protein MutL from Listeria innocua serovar 6a (strain ATCC BAA-680 / CLIP 11262).